The primary structure comprises 174 residues: MSKKNTLDDQDVSLFREAIAGARPIKQDTIRLHSPAIKQKAQIREIRETQQALHYFSDEYEPLLNQDGPVKYCRADVSTYEVKKLRRGDYIPDMMLDLHGLTQQQAKSELAALIEACRRQHIRCACVMHGHGKNILKQRIPLWLAQHPDVMAFHQAPKLWGGDAAILVLIEQNI.

Positions 96–171 (LDLHGLTQQQ…GDAAILVLIE (76 aa)) constitute a Smr domain.

It belongs to the SmrB family. Associates with collided ribosomes, but not with correctly translating polysomes.

Acts as a ribosome collision sensor. Detects stalled/collided disomes (pairs of ribosomes where the leading ribosome is stalled and a second ribosome has collided with it) and endonucleolytically cleaves mRNA at the 5' boundary of the stalled ribosome. Stalled/collided disomes form a new interface (primarily via the 30S subunits) that binds SmrB. Cleaved mRNA becomes available for tmRNA ligation, leading to ribosomal subunit dissociation and rescue of stalled ribosomes. The sequence is that of Ribosome rescue factor SmrB from Tolumonas auensis (strain DSM 9187 / NBRC 110442 / TA 4).